A 454-amino-acid chain; its full sequence is MTLPLHVVILAAGEGKRMRSALPKVLQPLAGQPMLAHVIATARELQPAAIHVVHGHGGAQVQAAFAGQPDLQWAEQRQQLGTGHAVQQALHAVPDAATVLVLYGDVPLIRSESLRELLHAPGRIAVLVADLANPSGYGRIVRNPEGKVAAIVEQKDADDEQRRIRTINTGILTAESTALRRWLGGLSNDNAQGEFYLTDVFASAAADYTPADMVQVSDPQDVEGANDPWQLAQLERAWQLRAARALCLQGVRMADPARVEQRGRVQVGHDVQLDIDVILEGEVTLGDGVVIGPFVRLRDVQLAAGTQVRAHCDLEGVVTEGAVQIGPFARLRPGTVLADGVHIGNFVETKKVVMGAGSKANHLTYLGDAVVGSKVNIGAGTITCNYDGVNKSQTTIGDGAFVGSNSALVAPIEIGTGATIGAGSVITRDAPPHQLSVARPRQTVIEGWERPKKK.

Positions 1-228 (MTLPLHVVIL…PQDVEGANDP (228 aa)) are pyrophosphorylase. UDP-N-acetyl-alpha-D-glucosamine contacts are provided by residues 10–13 (LAAG), Lys24, Gln76, 81–82 (GT), 103–105 (YGD), Gly138, Glu153, Asn168, and Asn226. Asp105 serves as a coordination point for Mg(2+). Asn226 lines the Mg(2+) pocket. The interval 229–249 (WQLAQLERAWQLRAARALCLQ) is linker. An N-acetyltransferase region spans residues 250-454 (GVRMADPARV…IEGWERPKKK (205 aa)). 2 residues coordinate UDP-N-acetyl-alpha-D-glucosamine: Arg332 and Lys350. Residue His362 is the Proton acceptor of the active site. UDP-N-acetyl-alpha-D-glucosamine contacts are provided by Tyr365 and Asn376. Acetyl-CoA-binding positions include Ala379, 385–386 (NY), Ser404, Ala422, and Arg439.

This sequence in the N-terminal section; belongs to the N-acetylglucosamine-1-phosphate uridyltransferase family. It in the C-terminal section; belongs to the transferase hexapeptide repeat family. In terms of assembly, homotrimer. Mg(2+) is required as a cofactor.

It localises to the cytoplasm. It carries out the reaction alpha-D-glucosamine 1-phosphate + acetyl-CoA = N-acetyl-alpha-D-glucosamine 1-phosphate + CoA + H(+). It catalyses the reaction N-acetyl-alpha-D-glucosamine 1-phosphate + UTP + H(+) = UDP-N-acetyl-alpha-D-glucosamine + diphosphate. It functions in the pathway nucleotide-sugar biosynthesis; UDP-N-acetyl-alpha-D-glucosamine biosynthesis; N-acetyl-alpha-D-glucosamine 1-phosphate from alpha-D-glucosamine 6-phosphate (route II): step 2/2. It participates in nucleotide-sugar biosynthesis; UDP-N-acetyl-alpha-D-glucosamine biosynthesis; UDP-N-acetyl-alpha-D-glucosamine from N-acetyl-alpha-D-glucosamine 1-phosphate: step 1/1. Its pathway is bacterial outer membrane biogenesis; LPS lipid A biosynthesis. Catalyzes the last two sequential reactions in the de novo biosynthetic pathway for UDP-N-acetylglucosamine (UDP-GlcNAc). The C-terminal domain catalyzes the transfer of acetyl group from acetyl coenzyme A to glucosamine-1-phosphate (GlcN-1-P) to produce N-acetylglucosamine-1-phosphate (GlcNAc-1-P), which is converted into UDP-GlcNAc by the transfer of uridine 5-monophosphate (from uridine 5-triphosphate), a reaction catalyzed by the N-terminal domain. In Xanthomonas campestris pv. campestris (strain 8004), this protein is Bifunctional protein GlmU.